The sequence spans 362 residues: 5-amino-6-(D-ribitylamino)uracil--L-tyrosine 4-hydroxyphenyl transferase (362 aa).

Residues 48–294 (ITYVVNRNIN…GDTIKNIQVS (247 aa)) form the Radical SAM core domain. [4Fe-4S] cluster contacts are provided by C62, C66, and C69.

The protein belongs to the radical SAM superfamily. CofH family. As to quaternary structure, consists of two subunits, CofG and CofH. [4Fe-4S] cluster serves as cofactor.

It catalyses the reaction 5-amino-6-(D-ribitylamino)uracil + L-tyrosine + S-adenosyl-L-methionine = 5-amino-5-(4-hydroxybenzyl)-6-(D-ribitylimino)-5,6-dihydrouracil + 2-iminoacetate + 5'-deoxyadenosine + L-methionine + H(+). It functions in the pathway cofactor biosynthesis; coenzyme F0 biosynthesis. Functionally, catalyzes the radical-mediated synthesis of 5-amino-5-(4-hydroxybenzyl)-6-(D-ribitylimino)-5,6-dihydrouracil from 5-amino-6-(D-ribitylamino)uracil and L-tyrosine. In Methanococcus aeolicus (strain ATCC BAA-1280 / DSM 17508 / OCM 812 / Nankai-3), this protein is 5-amino-6-(D-ribitylamino)uracil--L-tyrosine 4-hydroxyphenyl transferase.